A 369-amino-acid polypeptide reads, in one-letter code: MCAFAAILSLLSVLLMATSRSSDAAPLGTLVSVEGVRDNQLVGYGLVVGLNGSGDGQQIRYTGQSIANVLKQFGVTLPEGIRLRSRNVAAVMVSANFPAGYVPGQKIDVTVSSMGDAKSLRGGTLLLTPLRAADGVVYALAQGNLVVPGVSAQGRSGSSVTINATAAGRIPQGATIEQEIPSDLDAKPSVRLSLKRPSFQTATSIVAAIDRMAGPGAATSRDGTSVEVRAPEDPTARVAFLAKLTAINVTPQKEPPRVVFNSRTGTVVISQGMTVSPAAVSHGTLKVTISEGAIVSQPNPLGGGKTAVVPLSQVDVQQDGNRMFNWPAGVSLQKIVDTINSTGASPDDVMAILQALDEAGALNGELVVI.

Residues 1 to 24 form the signal peptide; that stretch reads MCAFAAILSLLSVLLMATSRSSDA.

The protein belongs to the FlgI family. As to quaternary structure, the basal body constitutes a major portion of the flagellar organelle and consists of four rings (L,P,S, and M) mounted on a central rod.

The protein resides in the periplasm. The protein localises to the bacterial flagellum basal body. Its function is as follows. Assembles around the rod to form the L-ring and probably protects the motor/basal body from shearing forces during rotation. In Burkholderia thailandensis (strain ATCC 700388 / DSM 13276 / CCUG 48851 / CIP 106301 / E264), this protein is Flagellar P-ring protein 2.